The following is a 274-amino-acid chain: Probable S-adenosylmethionine-dependent methyltransferase MT3114 (274 aa).

Residues 1 to 24 (MCAFVPHVPRHSRGDNPPSASTAS) form a disordered region.

Belongs to the methyltransferase superfamily.

Its function is as follows. Probable S-adenosylmethionine-dependent methyltransferase required for the 6-O-methylation of the polysaccharide backbone of 6-O-methylglucosyl lipopolysaccharides (MGLP). The chain is Probable S-adenosylmethionine-dependent methyltransferase MT3114 from Mycobacterium tuberculosis (strain CDC 1551 / Oshkosh).